Consider the following 85-residue polypeptide: uncharacterized protein (85 aa).

Residues methionine 1–serine 20 form the signal peptide.

This is an uncharacterized protein from Invertebrate iridescent virus 6 (IIV-6).